A 358-amino-acid polypeptide reads, in one-letter code: MFDRLEAVEQRYEKLNELLMDPDVINDPKKLRDYSKEQADLEETVQTYREYKSVREQLAEAKAMLEEKLEPELREMVKEEIGELEEREEALVEKLKVLLLPKDPNDEKNVIMEIRAAAGGEEAALFAGDLYRMYTRYAESQGWKTEVIEASPTGLGGYKEIIFMINGKGAYSKLKFENGAHRVQRVPETESGGRIHTSTATVACLPEMEEIEVEINEKDIRVDTFASSGPGGQSVNTTMSAVRLTHIPTGIVVTCQDEKSQIKNKEKAMKVLRARIYDKYQQEARAEYDQTRKQAVGTGDRSERIRTYNFPQNRVTDHRIGLTIQKLDQVLDGHLDEIIEALILDDQAKKLEQANDAS.

Gln233 is subject to N5-methylglutamine.

Belongs to the prokaryotic/mitochondrial release factor family. Post-translationally, methylated by PrmC. Methylation increases the termination efficiency of RF1.

The protein resides in the cytoplasm. Peptide chain release factor 1 directs the termination of translation in response to the peptide chain termination codons UAG and UAA. This chain is Peptide chain release factor 1, found in Geobacillus kaustophilus (strain HTA426).